Reading from the N-terminus, the 290-residue chain is Translin-associated protein X (290 aa).

Positions 1–31 (MNGKEGPGGFRKRKHDTFPHNQRREGKDASL) are disordered. The segment covering 16–28 (DTFPHNQRREGKD) has biased composition (basic and acidic residues). Residues 73–208 (LLHRITSAPD…MRMCINSVGN (136 aa)) are interaction with C1D. Mg(2+)-binding residues include Glu-129 and Glu-197. Lys-279 is covalently cross-linked (Glycyl lysine isopeptide (Lys-Gly) (interchain with G-Cter in SUMO2)).

Belongs to the translin family. As to quaternary structure, ring-shaped heterooctamer of six TSN and two TSNAX subunits. Interacts with GOLGA3, TSNAXIP1, SUN1 and AKAP9. Interacts with the homodimeric form of C1D following gamma-radiation. Interacts with TSN and C1D in a mutually exclusive manner. In terms of processing, sumoylated with SUMO1. Detected in heart, brain, lung, liver, kidney and testis.

The protein resides in the cytoplasm. Its subcellular location is the perinuclear region. It is found in the golgi apparatus. The protein localises to the nucleus. Its function is as follows. Acts in combination with TSN as an endonuclease involved in the activation of the RNA-induced silencing complex (RISC). Possible role in spermatogenesis. In Mus musculus (Mouse), this protein is Translin-associated protein X (Tsnax).